A 578-amino-acid polypeptide reads, in one-letter code: Synaptic defective enhancer 1 (578 aa).

Disordered stretches follow at residues 1–62 (MGEP…RKET), 173–216 (SEQA…SMDQ), 426–457 (PPLP…VSSA), and 474–578 (LGLH…FSNF). The span at 444 to 455 (PAAPVPASVPVS) shows a compositional bias: low complexity. 2 stretches are compositionally biased toward pro residues: residues 481–491 (PPPPPPPPPPT) and 500–542 (IPPP…PNPN). Positions 565–578 (NQFPPQQQQSFSNF) are enriched in low complexity.

In terms of assembly, may interact (via C-terminus) with ssup-72; the interaction may prevent ssup-72 binding to RNA polymerase II subunit ama-1. As to expression, expressed in germline, oocytes, epidermis, pharyngeal bulb and neurons.

It is found in the nucleus. The protein resides in the nucleus speckle. In terms of biological role, acts as a negative regulator of nuclear pre-mRNA 3'-end processing (mRNA polyadenylation). Plays a role in tissue-specific expression of protein isoforms by regulating differential processing of pre-mRNA 3'-end (alternative polyadenylation). In neurons, regulates alternative polyadenylation of specific mRNAs including unc-44 and dlk-1 by interacting with phosphatase ssup-72 and thus preventing ssup-72 dephosphorylation of RNA polymerase II subunit ama-1. Specifically, alters the usage of internal polyadenylation sites (PAS) to promote the production of neuron-specific unc-44 isoform and dlk-1 isoform c, both required for normal synapse and axon development. Conversely, in the epidermis, by inhibiting ssup-72 function, promotes the usage of an internal PAS preventing the production of one of unc-44 isoforms. In neurons, also negatively regulates protein levels of pre-RNA processing protein psf-2. The protein is Synaptic defective enhancer 1 of Caenorhabditis elegans.